A 365-amino-acid chain; its full sequence is UDP-N-acetylglucosamine--N-acetylmuramyl-(pentapeptide) pyrophosphoryl-undecaprenol N-acetylglucosamine transferase (365 aa).

UDP-N-acetyl-alpha-D-glucosamine contacts are provided by residues 11–13 (TGG), asparagine 124, arginine 165, serine 192, isoleucine 246, and glutamine 291.

The protein belongs to the glycosyltransferase 28 family. MurG subfamily.

Its subcellular location is the cell inner membrane. The enzyme catalyses di-trans,octa-cis-undecaprenyl diphospho-N-acetyl-alpha-D-muramoyl-L-alanyl-D-glutamyl-meso-2,6-diaminopimeloyl-D-alanyl-D-alanine + UDP-N-acetyl-alpha-D-glucosamine = di-trans,octa-cis-undecaprenyl diphospho-[N-acetyl-alpha-D-glucosaminyl-(1-&gt;4)]-N-acetyl-alpha-D-muramoyl-L-alanyl-D-glutamyl-meso-2,6-diaminopimeloyl-D-alanyl-D-alanine + UDP + H(+). Its pathway is cell wall biogenesis; peptidoglycan biosynthesis. Its function is as follows. Cell wall formation. Catalyzes the transfer of a GlcNAc subunit on undecaprenyl-pyrophosphoryl-MurNAc-pentapeptide (lipid intermediate I) to form undecaprenyl-pyrophosphoryl-MurNAc-(pentapeptide)GlcNAc (lipid intermediate II). The sequence is that of UDP-N-acetylglucosamine--N-acetylmuramyl-(pentapeptide) pyrophosphoryl-undecaprenol N-acetylglucosamine transferase from Nitratidesulfovibrio vulgaris (strain DP4) (Desulfovibrio vulgaris).